Consider the following 372-residue polypeptide: tRNA-specific 2-thiouridylase MnmA 1 (372 aa).

ATP is bound by residues alanine 26–serine 33 and methionine 52. Residue cysteine 118 is the Nucleophile of the active site. Cysteine 118 and cysteine 214 are oxidised to a cystine. Glycine 142 contacts ATP. Residues lysine 164–glutamine 166 are interaction with tRNA. Residue cysteine 214 is the Cysteine persulfide intermediate of the active site.

Belongs to the MnmA/TRMU family.

The protein localises to the cytoplasm. The enzyme catalyses S-sulfanyl-L-cysteinyl-[protein] + uridine(34) in tRNA + AH2 + ATP = 2-thiouridine(34) in tRNA + L-cysteinyl-[protein] + A + AMP + diphosphate + H(+). In terms of biological role, catalyzes the 2-thiolation of uridine at the wobble position (U34) of tRNA, leading to the formation of s(2)U34. This Syntrophus aciditrophicus (strain SB) protein is tRNA-specific 2-thiouridylase MnmA 1.